The sequence spans 381 residues: Anhydro-N-acetylmuramic acid kinase (381 aa).

22–29 (GTSIDGID) contacts ATP.

Belongs to the anhydro-N-acetylmuramic acid kinase family.

It carries out the reaction 1,6-anhydro-N-acetyl-beta-muramate + ATP + H2O = N-acetyl-D-muramate 6-phosphate + ADP + H(+). The protein operates within amino-sugar metabolism; 1,6-anhydro-N-acetylmuramate degradation. It participates in cell wall biogenesis; peptidoglycan recycling. In terms of biological role, catalyzes the specific phosphorylation of 1,6-anhydro-N-acetylmuramic acid (anhMurNAc) with the simultaneous cleavage of the 1,6-anhydro ring, generating MurNAc-6-P. Is required for the utilization of anhMurNAc either imported from the medium or derived from its own cell wall murein, and thus plays a role in cell wall recycling. This is Anhydro-N-acetylmuramic acid kinase from Xylella fastidiosa (strain Temecula1 / ATCC 700964).